The primary structure comprises 257 residues: Imidazole glycerol phosphate synthase subunit HisF (257 aa).

Active-site residues include D11 and D130.

This sequence belongs to the HisA/HisF family. As to quaternary structure, heterodimer of HisH and HisF.

The protein localises to the cytoplasm. It carries out the reaction 5-[(5-phospho-1-deoxy-D-ribulos-1-ylimino)methylamino]-1-(5-phospho-beta-D-ribosyl)imidazole-4-carboxamide + L-glutamine = D-erythro-1-(imidazol-4-yl)glycerol 3-phosphate + 5-amino-1-(5-phospho-beta-D-ribosyl)imidazole-4-carboxamide + L-glutamate + H(+). Its pathway is amino-acid biosynthesis; L-histidine biosynthesis; L-histidine from 5-phospho-alpha-D-ribose 1-diphosphate: step 5/9. Functionally, IGPS catalyzes the conversion of PRFAR and glutamine to IGP, AICAR and glutamate. The HisF subunit catalyzes the cyclization activity that produces IGP and AICAR from PRFAR using the ammonia provided by the HisH subunit. The polypeptide is Imidazole glycerol phosphate synthase subunit HisF (Vibrio parahaemolyticus serotype O3:K6 (strain RIMD 2210633)).